Here is a 286-residue protein sequence, read N- to C-terminus: Protein HEAT-STRESS-ASSOCIATED 32 (286 aa).

Belongs to the phosphosulfolactate synthase family.

Transactivator required, together with HSP101, for long-term acquired thermotolerance (LAT) maintenance, probably by regulating heat-inducible genes expression, thus being a cellular component of thermomemory. The sequence is that of Protein HEAT-STRESS-ASSOCIATED 32 from Arabidopsis thaliana (Mouse-ear cress).